A 215-amino-acid polypeptide reads, in one-letter code: 3-demethoxyubiquinol 3-hydroxylase (215 aa).

Glu64, Glu94, His97, Glu146, Glu178, and His181 together coordinate Fe cation.

It belongs to the COQ7 family. Fe cation serves as cofactor.

It localises to the cell membrane. The enzyme catalyses a 5-methoxy-2-methyl-3-(all-trans-polyprenyl)benzene-1,4-diol + AH2 + O2 = a 3-demethylubiquinol + A + H2O. It functions in the pathway cofactor biosynthesis; ubiquinone biosynthesis. Its function is as follows. Catalyzes the hydroxylation of 2-nonaprenyl-3-methyl-6-methoxy-1,4-benzoquinol during ubiquinone biosynthesis. In Coxiella burnetii (strain Dugway 5J108-111), this protein is 3-demethoxyubiquinol 3-hydroxylase.